The chain runs to 177 residues: PLAC8-like protein 1 (177 aa).

It belongs to the cornifelin family.

In Homo sapiens (Human), this protein is PLAC8-like protein 1 (PLAC8L1).